Reading from the N-terminus, the 954-residue chain is Mycolic acid-containing lipids exporter MmpL11 (954 aa).

12 consecutive transmembrane segments (helical) span residues 11–31 (FRWAVFATWLLLLVPSIYLAL), 188–208 (IVLIVLLAVFGSLAAAALPLV), 214–234 (VVVTMGLVYLLSMFTTMSVFV), 235–255 (TSTVSMFGIAVAIDYSLFILM), 279–299 (GLAVALSGLTVIASVTGIYLI), 312–334 (ILAVAVAVLTSTTLTPAVLATFG), 373–393 (AIAAAILLLVLAAPAFNMVLG), 529–549 (TQPLVFVFVALIAFVMLLVSI), 559–579 (VLMTVLSVAAAYGSLVVVFQW), 597–617 (IPPLVLAMTFGLSMDYEIFLL), 648–668 (AALIMIAVFIGFAFAGMPLVA), and 670–690 (LGVACAVAIAVDATVVRLVLV).

The protein resides in the cell inner membrane. Functionally, contributes to cell wall biosynthesis and biofilm formation. Transports the mycolic acid-containing lipids monomeromycolyl diacylglycerol (MMDAG) and mycolate ester wax (WE) to the bacterial surface. This chain is Mycolic acid-containing lipids exporter MmpL11, found in Mycolicibacterium smegmatis (strain ATCC 700084 / mc(2)155) (Mycobacterium smegmatis).